The primary structure comprises 487 residues: Variant surface glycoprotein WRATAT B (487 aa).

Positions 1–19 (MWIILALLTLAGSRVAHGA) are cleaved as a signal peptide. 4 N-linked (GlcNAc...) asparagine glycosylation sites follow: asparagine 71, asparagine 84, asparagine 418, and asparagine 465. The disordered stretch occupies residues 443-468 (KPKAGTEAATTGPGERDAGATANTTG). Residue serine 470 is the site of GPI-anchor amidated serine attachment. The propeptide at 471–487 (NSFVIKTSPLLFAFLLF) is removed in mature form.

It is found in the cell membrane. Its function is as follows. VSG forms a coat on the surface of the parasite. The trypanosome evades the immune response of the host by expressing a series of antigenically distinct VSGs from an estimated 1000 VSG genes. The sequence is that of Variant surface glycoprotein WRATAT B from Trypanosoma brucei rhodesiense.